Here is a 371-residue protein sequence, read N- to C-terminus: Macronuclear solute carrier homolog CR-MSC (371 aa).

Solcar repeat units lie at residues 16–111, 120–208, and 215–304; these read RMNY…FYDK, ARPD…CKEN, and PHWI…LSQF. The next 6 helical transmembrane spans lie at 22–42, 89–109, 126–146, 184–204, 221–241, and 281–301; these read FAAA…LDMV, TFFF…GYFY, VAAG…IDIV, AGAN…IYDW, LWGT…FDMI, and FGSF…ICYL.

This sequence belongs to the mitochondrial carrier (TC 2.A.29) family.

It is found in the membrane. In Oxytricha fallax, this protein is Macronuclear solute carrier homolog CR-MSC.